The sequence spans 333 residues: MDTVLTIGSHSSLQILHGAKKEGFKTVQITPKNRVNFYSQFSFIDEILGYNNEDEAVEFVNKYSNRGALIPHGSLVEYVGSERVSKITTKIFGNRNLFAWESNQKKKMSLLRRSGIQVPEEFENVEDVDRLVIVKLPGAKGGKGYFIAKTKSEVKEGLNRLISSKLIKDVNDVIIQEYVIGVPMYFQFFYSPILNRLEITGIDIRYETNVDGLRRLPENLADPTFVVVGNIPAVARESLLPKVYDYGMSFVNTVKEVVPPGMIGPFCLESVVKDDGSIVVFEFSGRIVAGTNLYIAGSPYSWLYWDEPMSVGRRISREIRLALNSNKLEVIFT.

Residues H10 and S74 each coordinate 5-amino-1-(5-phospho-beta-D-ribosyl)imidazole-4-carboxamide. Residues 95 to 324 enclose the ATP-grasp domain; that stretch reads RNLFAWESNQ…ISREIRLALN (230 aa). ATP contacts are provided by residues 125 to 185 and E207; that span reads VEDV…VPMY. Residue N230 coordinates 5-amino-1-(5-phospho-beta-D-ribosyl)imidazole-4-carboxamide. The Mg(2+) site is built by E269 and E282.

This sequence belongs to the phosphohexose mutase family. It depends on Mg(2+) as a cofactor. Mn(2+) serves as cofactor.

It catalyses the reaction 5-amino-1-(5-phospho-beta-D-ribosyl)imidazole-4-carboxamide + formate + ATP = 5-formamido-1-(5-phospho-D-ribosyl)imidazole-4-carboxamide + ADP + phosphate. It participates in purine metabolism; IMP biosynthesis via de novo pathway; 5-formamido-1-(5-phospho-D-ribosyl)imidazole-4-carboxamide from 5-amino-1-(5-phospho-D-ribosyl)imidazole-4-carboxamide (formate route): step 1/1. Its function is as follows. Catalyzes the ATP- and formate-dependent formylation of 5-aminoimidazole-4-carboxamide-1-beta-d-ribofuranosyl 5'-monophosphate (AICAR) to 5-formaminoimidazole-4-carboxamide-1-beta-d-ribofuranosyl 5'-monophosphate (FAICAR) in the absence of folates. The sequence is that of 5-formaminoimidazole-4-carboxamide-1-(beta)-D-ribofuranosyl 5'-monophosphate synthetase from Sulfolobus acidocaldarius (strain ATCC 33909 / DSM 639 / JCM 8929 / NBRC 15157 / NCIMB 11770).